Reading from the N-terminus, the 102-residue chain is Small ribosomal subunit protein uS10 (102 aa).

This sequence belongs to the universal ribosomal protein uS10 family. As to quaternary structure, part of the 30S ribosomal subunit.

Involved in the binding of tRNA to the ribosomes. The protein is Small ribosomal subunit protein uS10 of Hyperthermus butylicus (strain DSM 5456 / JCM 9403 / PLM1-5).